A 277-amino-acid polypeptide reads, in one-letter code: 3-methyl-2-oxobutanoate hydroxymethyltransferase (277 aa).

Residues aspartate 53 and aspartate 96 each coordinate Mg(2+). 3-methyl-2-oxobutanoate-binding positions include 53-54 (DS), aspartate 96, and lysine 126. Glutamate 128 contributes to the Mg(2+) binding site. The active-site Proton acceptor is the glutamate 195.

It belongs to the PanB family. As to quaternary structure, homodecamer; pentamer of dimers. Mg(2+) is required as a cofactor.

Its subcellular location is the cytoplasm. The catalysed reaction is 3-methyl-2-oxobutanoate + (6R)-5,10-methylene-5,6,7,8-tetrahydrofolate + H2O = 2-dehydropantoate + (6S)-5,6,7,8-tetrahydrofolate. It functions in the pathway cofactor biosynthesis; (R)-pantothenate biosynthesis; (R)-pantoate from 3-methyl-2-oxobutanoate: step 1/2. Catalyzes the reversible reaction in which hydroxymethyl group from 5,10-methylenetetrahydrofolate is transferred onto alpha-ketoisovalerate to form ketopantoate. In Chlorobium luteolum (strain DSM 273 / BCRC 81028 / 2530) (Pelodictyon luteolum), this protein is 3-methyl-2-oxobutanoate hydroxymethyltransferase.